Consider the following 65-residue polypeptide: Myotoxin-1 (65 aa).

The signal sequence occupies residues 1–22 (MKILYLLFAFLFLAFLSEPGNA). 3 disulfide bridges follow: Cys26/Cys58, Cys33/Cys52, and Cys40/Cys59.

This sequence belongs to the crotamine-myotoxin family. In terms of assembly, monomer. In terms of tissue distribution, expressed by the venom gland.

The protein localises to the secreted. Its function is as follows. Cationic peptide that possesses multiple functions. It acts as a cell-penetrating peptide (CPP), and as a potent voltage-gated potassium channel (Kv) inhibitor. It exhibits antimicrobial activities, hind limb paralysis, and severe muscle necrosis by a non-enzymatic mechanism. This is Myotoxin-1 from Crotalus durissus terrificus (South American rattlesnake).